A 254-amino-acid polypeptide reads, in one-letter code: Adenosine 5'-phosphosulfate reductase (254 aa).

C131, C132, C212, and C215 together coordinate [4Fe-4S] cluster. C238 acts as the Nucleophile; cysteine thiosulfonate intermediate in catalysis.

The protein belongs to the PAPS reductase family. CysH subfamily. It depends on [4Fe-4S] cluster as a cofactor.

The protein localises to the cytoplasm. The enzyme catalyses [thioredoxin]-disulfide + sulfite + AMP + 2 H(+) = adenosine 5'-phosphosulfate + [thioredoxin]-dithiol. It participates in sulfur metabolism; hydrogen sulfide biosynthesis; sulfite from sulfate. Functionally, catalyzes the formation of sulfite from adenosine 5'-phosphosulfate (APS) using thioredoxin as an electron donor. The protein is Adenosine 5'-phosphosulfate reductase of Mesorhizobium japonicum (strain LMG 29417 / CECT 9101 / MAFF 303099) (Mesorhizobium loti (strain MAFF 303099)).